Reading from the N-terminus, the 37-residue chain is Large ribosomal subunit protein bL36 (37 aa).

The protein belongs to the bacterial ribosomal protein bL36 family.

This is Large ribosomal subunit protein bL36 from Histophilus somni (strain 129Pt) (Haemophilus somnus).